Consider the following 393-residue polypeptide: MHFTRTLFNQVASKASRQLPVQKRVQMAYDLHIPNKTVNPNLNIRSHEPIVFVHGIFGSKKNYRFDCQKIANVTHTPVYTVDLRNHGQSIHALPFDYETLAQDVADFCEDHGLKKVNLIGYSLGAKICMLTMLQNPDLIRSGVIIDNSPIEQPHIEIFLQMFVKSMIHVLNSTKIEANDSDWKRKADDAMKRYIPDGGIRKYLLANLINKVPKGYKSPVIDYDDGFIHFQNPVKHMTEVAVKNVSAWPTEKVAGKTFEGPIRFIKGTKSAFIDDAGKKAIAGYFPNHSISEINATHFILNERPLEYVRVICDFIKTERFRSLQEHLRNVEHFSPSEIEAKQAAKHAQQIEELRKVTSTSESSIPHSTQSSEQAFTENIDLARQEREHQKSVSA.

The N-terminal 25 residues, 1–25 (MHFTRTLFNQVASKASRQLPVQKRV), are a transit peptide targeting the mitochondrion. Positions 49–151 (PIVFVHGIFG…GVIIDNSPIE (103 aa)) constitute an AB hydrolase-1 domain. Catalysis depends on charge relay system residues Ser-122, Asp-146, and His-296. Over residues 343-354 (AKHAQQIEELRK) the composition is skewed to basic and acidic residues. The tract at residues 343-393 (AKHAQQIEELRKVTSTSESSIPHSTQSSEQAFTENIDLARQEREHQKSVSA) is disordered. Polar residues predominate over residues 355–375 (VTSTSESSIPHSTQSSEQAFT). The segment covering 379 to 393 (DLARQEREHQKSVSA) has biased composition (basic and acidic residues).

This sequence belongs to the AB hydrolase superfamily.

It is found in the mitochondrion. It catalyses the reaction ethanol + acetyl-CoA = ethyl acetate + CoA. The catalysed reaction is acetyl-CoA + H2O = acetate + CoA + H(+). The enzyme catalyses ethyl acetate + H2O = ethanol + acetate + H(+). Its function is as follows. Alcohol acetyltransferase that catalyzes the synthesis of ethyl acetate from ethanol and acetyl-CoA. Can also function as a thioesterase by hydrolyzing acetyl-CoA in the absence of ethanol, as well as esterase hydrolyzing ethyl acetate. The sequence is that of Ethanol acetyltransferase 1 (EAT1) from Wickerhamomyces ciferrii (strain ATCC 14091 / BCRC 22168 / CBS 111 / JCM 3599 / NBRC 0793 / NRRL Y-1031 F-60-10) (Yeast).